The sequence spans 273 residues: Putative deoxyribonuclease TATDN1 homolog (273 aa).

The a divalent metal cation site is built by glutamate 91, histidine 125, histidine 147, and aspartate 195.

This sequence belongs to the metallo-dependent hydrolases superfamily. TatD-type hydrolase family. A divalent metal cation is required as a cofactor.

The protein resides in the nucleus. In terms of biological role, putative deoxyribonuclease. This Encephalitozoon cuniculi (strain GB-M1) (Microsporidian parasite) protein is Putative deoxyribonuclease TATDN1 homolog.